Consider the following 319-residue polypeptide: Aspartate carbamoyltransferase catalytic subunit (319 aa).

Carbamoyl phosphate contacts are provided by R64 and T65. Residue K92 participates in L-aspartate binding. Positions 114, 142, and 145 each coordinate carbamoyl phosphate. Positions 175 and 229 each coordinate L-aspartate. Residues G270 and P271 each contribute to the carbamoyl phosphate site.

Belongs to the aspartate/ornithine carbamoyltransferase superfamily. ATCase family. In terms of assembly, heterododecamer (2C3:3R2) of six catalytic PyrB chains organized as two trimers (C3), and six regulatory PyrI chains organized as three dimers (R2).

It carries out the reaction carbamoyl phosphate + L-aspartate = N-carbamoyl-L-aspartate + phosphate + H(+). It functions in the pathway pyrimidine metabolism; UMP biosynthesis via de novo pathway; (S)-dihydroorotate from bicarbonate: step 2/3. Its function is as follows. Catalyzes the condensation of carbamoyl phosphate and aspartate to form carbamoyl aspartate and inorganic phosphate, the committed step in the de novo pyrimidine nucleotide biosynthesis pathway. The protein is Aspartate carbamoyltransferase catalytic subunit of Rhodospirillum rubrum (strain ATCC 11170 / ATH 1.1.1 / DSM 467 / LMG 4362 / NCIMB 8255 / S1).